Reading from the N-terminus, the 431-residue chain is Serine hydroxymethyltransferase 2 (431 aa).

(6S)-5,6,7,8-tetrahydrofolate contacts are provided by residues Leu-131 and 135-137; that span reads GHL. Lys-240 is modified (N6-(pyridoxal phosphate)lysine).

It belongs to the SHMT family. In terms of assembly, homodimer. The cofactor is pyridoxal 5'-phosphate.

Its subcellular location is the cytoplasm. It carries out the reaction (6R)-5,10-methylene-5,6,7,8-tetrahydrofolate + glycine + H2O = (6S)-5,6,7,8-tetrahydrofolate + L-serine. It functions in the pathway one-carbon metabolism; tetrahydrofolate interconversion. Its pathway is amino-acid biosynthesis; glycine biosynthesis; glycine from L-serine: step 1/1. Catalyzes the reversible interconversion of serine and glycine with tetrahydrofolate (THF) serving as the one-carbon carrier. This reaction serves as the major source of one-carbon groups required for the biosynthesis of purines, thymidylate, methionine, and other important biomolecules. Also exhibits THF-independent aldolase activity toward beta-hydroxyamino acids, producing glycine and aldehydes, via a retro-aldol mechanism. The protein is Serine hydroxymethyltransferase 2 of Vibrio parahaemolyticus serotype O3:K6 (strain RIMD 2210633).